The chain runs to 95 residues: Aspartyl/glutamyl-tRNA(Asn/Gln) amidotransferase subunit C (95 aa).

It belongs to the GatC family. Heterotrimer of A, B and C subunits.

The catalysed reaction is L-glutamyl-tRNA(Gln) + L-glutamine + ATP + H2O = L-glutaminyl-tRNA(Gln) + L-glutamate + ADP + phosphate + H(+). The enzyme catalyses L-aspartyl-tRNA(Asn) + L-glutamine + ATP + H2O = L-asparaginyl-tRNA(Asn) + L-glutamate + ADP + phosphate + 2 H(+). Functionally, allows the formation of correctly charged Asn-tRNA(Asn) or Gln-tRNA(Gln) through the transamidation of misacylated Asp-tRNA(Asn) or Glu-tRNA(Gln) in organisms which lack either or both of asparaginyl-tRNA or glutaminyl-tRNA synthetases. The reaction takes place in the presence of glutamine and ATP through an activated phospho-Asp-tRNA(Asn) or phospho-Glu-tRNA(Gln). This chain is Aspartyl/glutamyl-tRNA(Asn/Gln) amidotransferase subunit C, found in Nitrosospira multiformis (strain ATCC 25196 / NCIMB 11849 / C 71).